The sequence spans 397 residues: Cysteine desulfurase (397 aa).

Pyridoxal 5'-phosphate-binding positions include asparagine 148, glutamine 176, and 196–198 (SAH). Lysine 199 is subject to N6-(pyridoxal phosphate)lysine. Residue threonine 234 coordinates pyridoxal 5'-phosphate. Catalysis depends on cysteine 321, which acts as the Cysteine persulfide intermediate. Cysteine 321 contacts [2Fe-2S] cluster.

It belongs to the class-V pyridoxal-phosphate-dependent aminotransferase family. NifS/IscS subfamily. As to quaternary structure, homodimer. It depends on pyridoxal 5'-phosphate as a cofactor.

It carries out the reaction (sulfur carrier)-H + L-cysteine = (sulfur carrier)-SH + L-alanine. In terms of biological role, catalyzes the removal of elemental sulfur atoms from cysteine to produce alanine. Seems to participate in the biosynthesis of the nitrogenase metalloclusters by providing the inorganic sulfur required for the Fe-S core formation. The sequence is that of Cysteine desulfurase from Klebsiella pneumoniae.